The following is a 598-amino-acid chain: MCGIVGYIGNNEKKQIILNGLKELEYRGYDSAGMAVMQEGELSFFKAVGKLENLANKCTDFESQGYGFAIGHTRWATHGKPTEINAHPHLGQYSCVIHNGIIENYKEIKDKLEKEGVSFLSQTDTEVIVQLFEFYARNLGVFEAWQKTIKELRGAFATLLVTKKDPNHVYFAKNAAPLIIGKNANKEWYFSSGDAPLIGSCDEVMYLEDLSLGYASKDELVVYENDILKSLCFSKLSGDKAYAKKDGFRFFMEKEIYEQSRVMSEVLMGRIQGDEVVFDELNNEDLSQVDEITLCACGTSYHAAMASAYLFERIAKVKAKVEIASEFRYREAIIKKDSLFIVISQSGETADTLEALKIAKEQGAKTFAICNVDNSNIVRLAHLSLLTRAGIEKGVASTKAFATQVLTLWMLAIFMAQKRNLNVSAEIKALLHTPNCVSVKQALHEKIHRLSKRYLDGHGFFFIGRDVFYPLALEGALKLKELSYLHAEGYPAGEMKHGPIALADSKLYTIALMPKHMLYEKTKSNVEELIARDSTVLSISPLEFDLSDDFIKTNEQDHYMCEFFEMMVITQLLAMEISIRLGNDVDMPRNLAKSVTVE.

Cys-2 serves as the catalytic Nucleophile; for GATase activity. The region spanning 2–218 (CGIVGYIGNN…DLSLGYASKD (217 aa)) is the Glutamine amidotransferase type-2 domain. SIS domains lie at 277–421 (VFDE…KRNL) and 450–588 (LSKR…VDMP). The active-site For Fru-6P isomerization activity is the Lys-593.

As to quaternary structure, homodimer.

The protein localises to the cytoplasm. It carries out the reaction D-fructose 6-phosphate + L-glutamine = D-glucosamine 6-phosphate + L-glutamate. Functionally, catalyzes the first step in hexosamine metabolism, converting fructose-6P into glucosamine-6P using glutamine as a nitrogen source. This is Glutamine--fructose-6-phosphate aminotransferase [isomerizing] from Campylobacter jejuni subsp. jejuni serotype O:2 (strain ATCC 700819 / NCTC 11168).